We begin with the raw amino-acid sequence, 264 residues long: 4-hydroxy-tetrahydrodipicolinate reductase (264 aa).

8-13 (GPRGKM) lines the NAD(+) pocket. Lysine 36 is an NADP(+) binding site. Residues 97–99 (GTT) and 123–126 (APNF) contribute to the NAD(+) site. The active-site Proton donor/acceptor is histidine 153. Histidine 154 serves as a coordination point for (S)-2,3,4,5-tetrahydrodipicolinate. The active-site Proton donor is the lysine 157. 163–164 (GT) serves as a coordination point for (S)-2,3,4,5-tetrahydrodipicolinate.

It belongs to the DapB family.

The protein resides in the cytoplasm. It catalyses the reaction (S)-2,3,4,5-tetrahydrodipicolinate + NAD(+) + H2O = (2S,4S)-4-hydroxy-2,3,4,5-tetrahydrodipicolinate + NADH + H(+). It carries out the reaction (S)-2,3,4,5-tetrahydrodipicolinate + NADP(+) + H2O = (2S,4S)-4-hydroxy-2,3,4,5-tetrahydrodipicolinate + NADPH + H(+). The protein operates within amino-acid biosynthesis; L-lysine biosynthesis via DAP pathway; (S)-tetrahydrodipicolinate from L-aspartate: step 4/4. In terms of biological role, catalyzes the conversion of 4-hydroxy-tetrahydrodipicolinate (HTPA) to tetrahydrodipicolinate. The protein is 4-hydroxy-tetrahydrodipicolinate reductase of Halalkalibacterium halodurans (strain ATCC BAA-125 / DSM 18197 / FERM 7344 / JCM 9153 / C-125) (Bacillus halodurans).